We begin with the raw amino-acid sequence, 91 residues long: Methanol dehydrogenase [cytochrome c] subunit 2 (91 aa).

The N-terminal stretch at 1–22 (MKHVLTLLALASVFAVSNQALA) is a signal peptide. C28 and C34 are disulfide-bonded.

Belongs to the methanol dehydrogenase subunit 2 family. As to quaternary structure, heterotetramer composed of 2 alpha and 2 beta subunits.

It is found in the cell inner membrane. The enzyme catalyses 2 Fe(III)-[cytochrome cL] + a primary alcohol = 2 Fe(II)-[cytochrome cL] + an aldehyde + 2 H(+). In terms of biological role, catalyzes the oxidation of primary alcohols including methanol. The sequence is that of Methanol dehydrogenase [cytochrome c] subunit 2 (moxI) from Methylophilus methylotrophus (Bacterium W3A1).